The primary structure comprises 554 residues: (E)-nerolidol synthase TPS18VF (554 aa).

Positions 276, 313, 317, 455, and 458 each coordinate (2E,6E)-farnesyl diphosphate. Mg(2+)-binding residues include D313 and D317. Positions 313 to 317 (DDIFD) match the DDXXD motif motif. The Mg(2+) site is built by D458, S462, and E466.

It belongs to the terpene synthase family. Tpsb subfamily. It depends on Mg(2+) as a cofactor. Mn(2+) serves as cofactor. In terms of tissue distribution, highly expressed in glandular trichomes.

The catalysed reaction is (2E,6E)-farnesyl diphosphate + H2O = (6E)-nerolidol + diphosphate. It carries out the reaction (2E)-geranyl diphosphate + H2O = (R)-linalool + diphosphate. It catalyses the reaction (2E)-geranyl diphosphate + H2O = (S)-linalool + diphosphate. The protein operates within secondary metabolite biosynthesis; terpenoid biosynthesis. In terms of biological role, involved in sesquiterpene olefins biosynthesis, constituants of cannabinoids and terpenoids-rich resins. Catalyzes primarily the conversion of (2E)-farnesyl diphosphate to (E)-nerolidol, and the conversion of (2E)-geranyl diphosphate to (+)linalool and (-)linalool. This chain is (E)-nerolidol synthase TPS18VF, found in Cannabis sativa (Hemp).